A 198-amino-acid chain; its full sequence is MGIRHELDILLVSENLALKNVELLKGDSYGCTINIKVNQQKKLDFIIILRPDWTEVRNVKKINMVCNGVVIDTTLIKKSFYEEVYSSSVTVFQNTTVEFFSDTSKKYKEEYPIVNINTIKRYYEIKDSRMTCINFESPISDYDQVNYLKDYINISDDYYLYDACDDCIISSDDDDDNDNADDDEEDDDEVNDIEDDYE.

The interval 171-198 (SDDDDDNDNADDDEEDDDEVNDIEDDYE) is disordered.

This sequence belongs to the poxviridae C7 protein family.

In terms of biological role, plays a role for multiplication of the virus in different cell types. The protein is Probable host range protein 2 of Bos taurus (Bovine).